The sequence spans 460 residues: Vitamin K-dependent protein C (460 aa).

The signal sequence occupies residues 1 to 18; the sequence is MWQFRVFLLLMSTWGISS. A propeptide spanning residues 19–41 is cleaved from the precursor; sequence IPAHPDPVFSSSEHAHQVLRVRR. In terms of domain architecture, Gla spans 42 to 87; the sequence is ANSFLEEMRPGSLERECMEEICDFEEAQEIFQNVEDTLAFWIKYFD. A 4-carboxyglutamate mark is found at Glu-47, Glu-48, Glu-55, Glu-57, Glu-60, Glu-61, Glu-66, Glu-67, Glu-70, and Glu-76. The cysteines at positions 58 and 63 are disulfide-linked. 9 disulfides stabilise this stretch: Cys-91–Cys-110, Cys-100–Cys-105, Cys-104–Cys-119, Cys-121–Cys-130, Cys-139–Cys-150, Cys-146–Cys-159, Cys-161–Cys-174, Cys-182–Cys-319, and Cys-238–Cys-254. EGF-like domains follow at residues 96–131 and 135–175; these read LDHQCDSPCCGHGTCIDGIGSFSCSCDKGWEGKFCQ and RFQD…MRCK. Asp-112 carries the (3R)-3-hydroxyaspartate modification. The Peptidase S1 domain maps to 213-449; the sequence is VNGTLTKQGD…YLKWIHSYIG (237 aa). Asn-214 carries N-linked (GlcNAc...) asparagine glycosylation. Residue His-253 is the Charge relay system of the active site. An N-linked (GlcNAc...) asparagine glycan is attached at Asn-290. Asp-299 functions as the Charge relay system in the catalytic mechanism. N-linked (GlcNAc...) asparagine glycosylation occurs at Asn-354. Cystine bridges form between Cys-372–Cys-386 and Cys-397–Cys-425. Catalysis depends on Ser-401, which acts as the Charge relay system.

It belongs to the peptidase S1 family. As to quaternary structure, synthesized as a single chain precursor, which is cleaved into a light chain and a heavy chain held together by a disulfide bond. The enzyme is then activated by thrombin, which cleaves a tetradecapeptide from the amino end of the heavy chain; this reaction, which occurs at the surface of endothelial cells, is strongly promoted by thrombomodulin. The vitamin K-dependent, enzymatic carboxylation of some Glu residues allows the modified protein to bind calcium. Post-translationally, the iron and 2-oxoglutarate dependent 3-hydroxylation of aspartate and asparagine is (R) stereospecific within EGF domains. As to expression, plasma; synthesized in the liver.

Its subcellular location is the secreted. It is found in the golgi apparatus. The protein resides in the endoplasmic reticulum. It carries out the reaction Degradation of blood coagulation factors Va and VIIIa.. Protein C is a vitamin K-dependent serine protease that regulates blood coagulation by inactivating factors Va and VIIIa in the presence of calcium ions and phospholipids. Exerts a protective effect on the endothelial cell barrier function. The sequence is that of Vitamin K-dependent protein C (Proc) from Mus musculus (Mouse).